Reading from the N-terminus, the 202-residue chain is Outer-membrane lipoprotein LolB (202 aa).

Residues 1–18 (MFRRTYFWLMLLPLFMVG) form the signal peptide. Cysteine 19 carries the N-palmitoyl cysteine lipid modification. Cysteine 19 carries the S-diacylglycerol cysteine lipid modification.

Belongs to the LolB family. In terms of assembly, monomer.

It localises to the cell outer membrane. Its function is as follows. Plays a critical role in the incorporation of lipoproteins in the outer membrane after they are released by the LolA protein. The protein is Outer-membrane lipoprotein LolB of Vibrio vulnificus (strain YJ016).